The sequence spans 360 residues: Phospho-N-acetylmuramoyl-pentapeptide-transferase (360 aa).

The next 10 helical transmembrane spans lie at 25–45 (RGIL…PWMI), 73–93 (TMGG…WADL), 97–117 (YVWT…VDDY), 132–152 (WKYF…YMTA), 167–187 (TIEI…IVGS), 199–219 (GLAI…CYLS), 236–256 (AGEL…FLWF), 263–283 (VFMG…IAVI), 288–308 (VVLF…MIQV), and 338–358 (VIVR…ATLK).

It belongs to the glycosyltransferase 4 family. MraY subfamily. The cofactor is Mg(2+).

Its subcellular location is the cell inner membrane. The enzyme catalyses UDP-N-acetyl-alpha-D-muramoyl-L-alanyl-gamma-D-glutamyl-meso-2,6-diaminopimeloyl-D-alanyl-D-alanine + di-trans,octa-cis-undecaprenyl phosphate = di-trans,octa-cis-undecaprenyl diphospho-N-acetyl-alpha-D-muramoyl-L-alanyl-D-glutamyl-meso-2,6-diaminopimeloyl-D-alanyl-D-alanine + UMP. It functions in the pathway cell wall biogenesis; peptidoglycan biosynthesis. In terms of biological role, catalyzes the initial step of the lipid cycle reactions in the biosynthesis of the cell wall peptidoglycan: transfers peptidoglycan precursor phospho-MurNAc-pentapeptide from UDP-MurNAc-pentapeptide onto the lipid carrier undecaprenyl phosphate, yielding undecaprenyl-pyrophosphoryl-MurNAc-pentapeptide, known as lipid I. This is Phospho-N-acetylmuramoyl-pentapeptide-transferase from Azotobacter vinelandii (strain DJ / ATCC BAA-1303).